Reading from the N-terminus, the 189-residue chain is Density-regulated protein homolog (189 aa).

Positions 105–172 constitute an SUI1 domain; the sequence is ICVSRAARGK…DLFDVIPEKW (68 aa).

It belongs to the DENR family. As to quaternary structure, interacts with MCTS1.

Regulates translation as part of a complex with MCTS1. Specifically required for translational re-initiation in mRNAs containing upstream open reading frames (uORFs). Not required for standard translational initiation. Regulates expression of a subset of gene products including mbc, InR and EcR. The protein is Density-regulated protein homolog of Drosophila melanogaster (Fruit fly).